A 351-amino-acid polypeptide reads, in one-letter code: Transcriptional activator POG1 (351 aa).

Positions 1–26 are enriched in basic and acidic residues; that stretch reads MKQEPHRQSEEKEKPKGPMAVEREQH. The tract at residues 1-56 is disordered; that stretch reads MKQEPHRQSEEKEKPKGPMAVEREQHTSLSSGTTVTASTGDESTNSRPVESSQTEK. A compositionally biased stretch (polar residues) spans 27 to 56; the sequence is TSLSSGTTVTASTGDESTNSRPVESSQTEK. 2 positions are modified to phosphoserine: Ser-152 and Ser-168. Disordered regions lie at residues 234–256 and 291–351; these read PGMGPQAQLPTMSSNSESQTPVM and QHQL…PPPT. Positions 241-256 are enriched in polar residues; sequence QLPTMSSNSESQTPVM. Ser-314 bears the Phosphoserine mark.

It belongs to the POG1 family. In terms of processing, phosphorylated by CDC28.

The protein localises to the nucleus. In terms of biological role, transcriptional activator which promotes cell cycle recovery with CLN2, after pheromone induced G1 arrest, probably inhibiting the ability of STE20 to activate the pheromone response pathway. Binds the promoters of genes that function in cell cycle regulation, cytoskeletal organization, and spindle assembly. May also be involved in stress-resistance. The protein is Transcriptional activator POG1 (POG1) of Saccharomyces cerevisiae (strain ATCC 204508 / S288c) (Baker's yeast).